A 1051-amino-acid polypeptide reads, in one-letter code: Transcription intermediary factor 1-alpha (1051 aa).

Positions Met-1–Glu-42 are disordered. A Glycyl lysine isopeptide (Lys-Gly) (interchain with G-Cter in SUMO2) cross-link involves residue Lys-7. Low complexity predominate over residues Ala-8–Pro-23. An RING-type zinc finger spans residues Cys-52–Cys-77. The interval Ser-94 to Pro-115 is disordered. Thr-97 carries the phosphothreonine modification. The segment covering Thr-97 to Gly-109 has biased composition (pro residues). Ser-110 carries the post-translational modification Phosphoserine. 2 consecutive B box-type zinc fingers follow at residues Lys-158–Glu-211 and Gln-218–Ile-259. Positions 163, 166, 187, and 200 each coordinate Zn(2+). Residue Lys-205 forms a Glycyl lysine isopeptide (Lys-Gly) (interchain with G-Cter in SUMO2) linkage. Zn(2+) contacts are provided by Cys-223, His-226, Cys-246, and His-251. Residue Lys-276 forms a Glycyl lysine isopeptide (Lys-Gly) (interchain with G-Cter in SUMO2) linkage. Residues Asn-289–Val-359 are a coiled coil. Residues Glu-429–Ser-457 form a disordered region. Residues Gln-431–Ser-457 are compositionally biased toward polar residues. Glycyl lysine isopeptide (Lys-Gly) (interchain with G-Cter in SUMO2) cross-links involve residues Lys-436 and Lys-458. Arg-469 carries the post-translational modification Omega-N-methylarginine. 2 stretches are compositionally biased toward low complexity: residues Ala-479–Pro-490 and Pro-501–Gln-510. Positions Ala-479 to Thr-551 are disordered. Pro residues predominate over residues Pro-526–Pro-535. Residues Leu-538–Thr-551 are compositionally biased toward polar residues. Glycyl lysine isopeptide (Lys-Gly) (interchain with G-Cter in SUMO2) cross-links involve residues Lys-553 and Lys-642. The disordered stretch occupies residues Thr-644 to Val-713. Phosphoserine is present on residues Ser-655, Ser-661, and Ser-668. A compositionally biased stretch (polar residues) spans Ser-655–Pro-667. A compositionally biased stretch (low complexity) spans Ser-686 to Asp-708. Residues Lys-703 and Lys-712 each participate in a glycyl lysine isopeptide (Lys-Gly) (interchain with G-Cter in SUMO2) cross-link. Glycyl lysine isopeptide (Lys-Gly) (interchain with G-Cter in SUMO); alternate cross-links involve residues Lys-724 and Lys-742. A Glycyl lysine isopeptide (Lys-Gly) (interchain with G-Cter in SUMO1); alternate cross-link involves residue Lys-724. Residues Lys-724 and Lys-742 each participate in a glycyl lysine isopeptide (Lys-Gly) (interchain with G-Cter in SUMO2); alternate cross-link. 2 positions are modified to phosphoserine: Ser-745 and Ser-769. The nuclear receptor binding site (NRBS) stretch occupies residues Asn-755–Arg-780. The segment at Ser-771–Glu-827 is disordered. Residues Gln-795–Ser-812 show a composition bias toward polar residues. Residue Lys-802 forms a Glycyl lysine isopeptide (Lys-Gly) (interchain with G-Cter in SUMO2) linkage. The residue at position 809 (Ser-809) is a Phosphoserine. Residue Lys-811 forms a Glycyl lysine isopeptide (Lys-Gly) (interchain with G-Cter in SUMO2) linkage. Ser-812 bears the Phosphoserine mark. Thr-819 carries the phosphothreonine modification. A PHD-type zinc finger spans residues Glu-827 to Leu-874. Positions Asn-835–Cys-841 are interaction with histone H3 that is not methylated at 'Lys-4' (H3K4me0). Lys-876 is covalently cross-linked (Glycyl lysine isopeptide (Lys-Gly) (interchain with G-Cter in SUMO2)). The Nuclear localization signal motif lies at Lys-892–Lys-908. In terms of domain architecture, Bromo spans Lys-900–Leu-1005. Residues Lys-950 and Lys-993 each participate in a glycyl lysine isopeptide (Lys-Gly) (interchain with G-Cter in SUMO2) cross-link. Residues Lys-1024–Lys-1051 are disordered. 2 positions are modified to phosphoserine: Ser-1026 and Ser-1029. Lys-1042 is covalently cross-linked (Glycyl lysine isopeptide (Lys-Gly) (interchain with G-Cter in SUMO2)). Over residues Lys-1042 to Lys-1051 the composition is skewed to basic and acidic residues. Residue Ser-1043 is modified to Phosphoserine.

As to quaternary structure, interacts (via bromo domain) with histone H3 (via N-terminus), provided that it is not methylated at 'Lys-4' (H3K4me0). Does not interact with histone H3 that is methylated at 'Lys-4' (H3K4me1, H3K4me2 or H3K4me3). Interacts (via bromo domain) with histone H3 (via N-terminus) that is acetylated at 'Lys-23' (H3K23ac). Has the highest affinity for histone H3 that is both unmodified at 'Lys-4' (H3K4me0) and acetylated at 'Lys-23' (H3K23ac). Has very low affinity for histone H3 that is methylated at 'Lys-9' (H3K9me), or acetylated at both 'Lys-9' (H3K9ac) and 'Lys-14' (H3K14ac), or acetylated at 'Lys-27' (H3K27ac) (in vitro). Interacts with TRIM16. Interacts with NR3C2/MCR. Interacts with the ligand-binding domain of estrogen receptors (in vitro). Interaction with DNA-bound estrogen receptors requires the presence of estradiol. Interacts with AR, CARM1, KAT5/TIP60, NCOA2/GRIP1, BRD7, CBX1, CBX3 and CBX5. Part of a coactivator complex containing TRIM24, NCOA2/GRIP1 and CARM1. Interacts with p53/TP53 and PML. Post-translationally, sumoylated. In terms of processing, phosphorylated at Ser-768 by ATM kinase induces ubiquitination and degradation during DNA damage. Undergoes ubiquitination-mediated degradation in response to DNA damage. As to expression, detected in embryonic and adult liver. Detected in zygote and throughout embryogenesis (at protein level). Detected in all adult tissues, with the highest expression level in testis.

The protein localises to the nucleus. It localises to the cytoplasm. The catalysed reaction is S-ubiquitinyl-[E2 ubiquitin-conjugating enzyme]-L-cysteine + [acceptor protein]-L-lysine = [E2 ubiquitin-conjugating enzyme]-L-cysteine + N(6)-ubiquitinyl-[acceptor protein]-L-lysine.. It functions in the pathway protein modification; protein ubiquitination. Functionally, transcriptional coactivator that interacts with numerous nuclear receptors and coactivators and modulates the transcription of target genes. Interacts with chromatin depending on histone H3 modifications, having the highest affinity for histone H3 that is both unmodified at 'Lys-4' (H3K4me0) and acetylated at 'Lys-23' (H3K23ac). Has E3 protein-ubiquitin ligase activity. Promotes ubiquitination and proteasomal degradation of p53/TP53. Plays a role in the regulation of cell proliferation and apoptosis via its effects on p53/TP53 levels. Up-regulates ligand-dependent transcription activation by AR, GCR/NR3C1, thyroid hormone receptor (TR) and ESR1. Modulates transcription activation by retinoic acid (RA) receptors, such as RARA. Plays a role in regulating retinoic acid-dependent proliferation of hepatocytes. Required for normal transition from proliferating neonatal hepatocytes to quiescent adult hepatocytes. Transcriptional coactivator that interacts with numerous nuclear receptors and coactivators and modulates the transcription of target genes. Interacts with chromatin depending on histone H3 modifications, having the highest affinity for histone H3 that is both unmodified at 'Lys-4' (H3K4me0) and acetylated at 'Lys-23' (H3K23ac). Has E3 protein-ubiquitin ligase activity. During the DNA damage response, participates in an autoregulatory feedback loop with TP53. Early in response to DNA damage, ATM kinase phosphorylates TRIM24 leading to its ubiquitination and degradation. After sufficient DNA repair has occurred, TP53 activates TRIM24 transcription, ultimately leading to TRIM24-mediated TP53 ubiquitination and degradation. Plays a role in the regulation of cell proliferation and apoptosis, at least in part via its effects on p53/TP53 levels. Up-regulates ligand-dependent transcription activation by AR, GCR/NR3C1, thyroid hormone receptor (TR) and ESR1. Modulates transcription activation by retinoic acid (RA) receptors, including RARA. Plays a role in regulating retinoic acid-dependent proliferation of hepatocytes. Also participates in innate immunity by mediating the specific 'Lys-63'-linked ubiquitination of TRAF3 leading to activation of downstream signal transduction of the type I IFN pathway. Additionally, negatively regulates NLRP3/CASP1/IL-1beta-mediated pyroptosis and cell migration probably by ubiquitinating NLRP3. The sequence is that of Transcription intermediary factor 1-alpha (Trim24) from Mus musculus (Mouse).